Reading from the N-terminus, the 72-residue chain is Translation initiation factor IF-1 (72 aa).

Positions 1-72 (MAKEDVIEIE…TRGRITYRFK (72 aa)) constitute an S1-like domain.

Belongs to the IF-1 family. As to quaternary structure, component of the 30S ribosomal translation pre-initiation complex which assembles on the 30S ribosome in the order IF-2 and IF-3, IF-1 and N-formylmethionyl-tRNA(fMet); mRNA recruitment can occur at any time during PIC assembly.

The protein resides in the cytoplasm. Its function is as follows. One of the essential components for the initiation of protein synthesis. Stabilizes the binding of IF-2 and IF-3 on the 30S subunit to which N-formylmethionyl-tRNA(fMet) subsequently binds. Helps modulate mRNA selection, yielding the 30S pre-initiation complex (PIC). Upon addition of the 50S ribosomal subunit IF-1, IF-2 and IF-3 are released leaving the mature 70S translation initiation complex. The chain is Translation initiation factor IF-1 from Streptococcus agalactiae serotype Ia (strain ATCC 27591 / A909 / CDC SS700).